The sequence spans 259 residues: BTB/POZ domain-containing protein KCTD4 (259 aa).

The BTB domain occupies 33 to 134 (TLMTLNVGGY…EVKSRWEKEQ (102 aa)).

In Mus musculus (Mouse), this protein is BTB/POZ domain-containing protein KCTD4 (Kctd4).